A 197-amino-acid chain; its full sequence is Probable GTP-binding protein EngB (197 aa).

The region spanning 22-195 is the EngB-type G domain; that stretch reads KRIEIAFVGR…LKVLESVIDF (174 aa). Residues 30–37, 57–61, 75–78, 142–145, and 174–176 each bind GTP; these read GRSNVGKS, GKTRL, DLPG, TKVD, and FSS. Positions 37 and 59 each coordinate Mg(2+).

This sequence belongs to the TRAFAC class TrmE-Era-EngA-EngB-Septin-like GTPase superfamily. EngB GTPase family. The cofactor is Mg(2+).

Its function is as follows. Necessary for normal cell division and for the maintenance of normal septation. This is Probable GTP-binding protein EngB from Clostridium kluyveri (strain ATCC 8527 / DSM 555 / NBRC 12016 / NCIMB 10680 / K1).